The sequence spans 254 residues: Nickel import ATP-binding protein NikD (254 aa).

The region spanning 2 to 241 (PQQIELRNIA…PKHTVTRSLV (240 aa)) is the ABC transporter domain. An ATP-binding site is contributed by 36–43 (GGSGSGKS).

Belongs to the ABC transporter superfamily. Nickel importer (TC 3.A.1.5.3) family. As to quaternary structure, the complex is composed of two ATP-binding proteins (NikD and NikE), two transmembrane proteins (NikB and NikC) and a solute-binding protein (NikA).

The protein resides in the cell inner membrane. The catalysed reaction is Ni(2+)(out) + ATP + H2O = Ni(2+)(in) + ADP + phosphate + H(+). Its function is as follows. Part of the ABC transporter complex NikABCDE involved in nickel import. Responsible for energy coupling to the transport system. The protein is Nickel import ATP-binding protein NikD of Escherichia coli (strain K12).